The primary structure comprises 207 residues: Ras-related protein Rab-2A (207 aa).

Residue 12–20 (GDTGVGKSC) participates in GTP binding. The short motif at 34-42 (HDLTIGVEF) is the Effector region element. Residues 60 to 64 (DTAGQ), 118 to 121 (NKSD), and 148 to 150 (SAK) contribute to the GTP site. The segment at 187 to 207 (GAPTSKQDGTDQKPAGGGCCK) is disordered. Residues cysteine 205 and cysteine 206 are each lipidated (S-geranylgeranyl cysteine).

It belongs to the small GTPase superfamily. Rab family.

The protein localises to the cell membrane. It carries out the reaction GTP + H2O = GDP + phosphate + H(+). Its activity is regulated as follows. Regulated by guanine nucleotide exchange factors (GEFs) which promote the exchange of bound GDP for free GTP, GTPase activating proteins (GAPs) which increase the GTP hydrolysis activity, and GDP dissociation inhibitors which inhibit the dissociation of the nucleotide from the GTPase. The small GTPases Rab are key regulators of intracellular membrane trafficking, from the formation of transport vesicles to their fusion with membranes. Rabs cycle between active GTP-bound and inactive GDP-bound states. In their active state, drive transport of vesicular carriers from donor organelles to acceptor organelles to regulate the membrane traffic that maintains organelle identity and morphology. The polypeptide is Ras-related protein Rab-2A (rab2A) (Dictyostelium discoideum (Social amoeba)).